Reading from the N-terminus, the 89-residue chain is Small ribosomal subunit protein bS20 (89 aa).

Residues 68 to 89 (PNKGARKSSRLDHFVNEQKSKQ) are disordered. Positions 76-89 (SRLDHFVNEQKSKQ) are enriched in basic and acidic residues.

The protein belongs to the bacterial ribosomal protein bS20 family.

Its function is as follows. Binds directly to 16S ribosomal RNA. The sequence is that of Small ribosomal subunit protein bS20 from Mycoplasmopsis agalactiae (strain NCTC 10123 / CIP 59.7 / PG2) (Mycoplasma agalactiae).